The sequence spans 199 residues: UPF0637 protein LVIS_1261 (199 aa).

It belongs to the UPF0637 family.

The sequence is that of UPF0637 protein LVIS_1261 from Levilactobacillus brevis (strain ATCC 367 / BCRC 12310 / CIP 105137 / JCM 1170 / LMG 11437 / NCIMB 947 / NCTC 947) (Lactobacillus brevis).